A 313-amino-acid chain; its full sequence is Beta-ribofuranosylphenol 5'-phosphate synthase (313 aa).

This sequence belongs to the beta-RFA-P synthase family. Homodimer.

The catalysed reaction is 5-phospho-alpha-D-ribose 1-diphosphate + 4-hydroxybenzoate + H(+) = 4-(beta-D-ribofuranosyl)phenol 5'-phosphate + CO2 + diphosphate. It carries out the reaction 4-aminobenzoate + 5-phospho-alpha-D-ribose 1-diphosphate + H(+) = 4-(beta-D-ribofuranosyl)aminobenzene 5'-phosphate + CO2 + diphosphate. It participates in cofactor biosynthesis; 5,6,7,8-tetrahydromethanopterin biosynthesis. Catalyzes the condensation of 4-hydroxybenzoate (HB) with 5-phospho-alpha-D-ribose 1-diphosphate (PRPP) to produce beta-ribofuranosylphenol 5'-phosphate (beta-RFH-P). Also catalyzes the condensation of 4-aminobenzoate (pABA) with PRPP to produce beta-ribofuranosylaminobenzene 5'-phosphate (beta-RFA-P). This is Beta-ribofuranosylphenol 5'-phosphate synthase from Archaeoglobus fulgidus (strain ATCC 49558 / DSM 4304 / JCM 9628 / NBRC 100126 / VC-16).